The primary structure comprises 502 residues: MGVENTKQTMSSQNIKPAKDSDDVLHTQFKEVKRSPMRYTMQLLAALAVSMASLMIGYSSSYTSPALVSMRDNTTATFEVTMDMAMWIGSIMPLSALIGGIIGGPCIEYIGRRNTILSTALPFLAGWLFIALATNVAMILVGRSICGFCVGVASLSLPVYLGESIQPEVRGSLGLLPTVFGNSGILMCFTAGMYLAWRNLALLGACIPIIFLILMFLIPETPRWYISKGKIKEARKSLQWLRGKTADISEELDSIQKMHIESERIATEGALIELFRKNHIKPVFISLGLMFFQQFSGINAVIFYTVQIFKDSGSTVDENLSTIIVGLVNFISTFVAAMIIDRLGRKMLLYISSILMCITLFTFGTFFYVKELMDVTAFGWIPLMSLIVYVIGFSFGFGPIPWLMMGEILPVKIRGTAASVATAFNWSCTFVVTKTYEDLVLHIGPYGTFWLFGTLVAVAFIFVIICVPETRGRSLEEIERRFAGPVRRTSAIANLKPMPITI.

Residues 1 to 38 (MGVENTKQTMSSQNIKPAKDSDDVLHTQFKEVKRSPMR) lie on the Cytoplasmic side of the membrane. The helical transmembrane segment at 39–59 (YTMQLLAALAVSMASLMIGYS) threads the bilayer. The Extracellular portion of the chain corresponds to 60–83 (SSYTSPALVSMRDNTTATFEVTMD). The N-linked (GlcNAc...) asparagine glycan is linked to asparagine 73. A helical membrane pass occupies residues 84–104 (MAMWIGSIMPLSALIGGIIGG). Residues 105–120 (PCIEYIGRRNTILSTA) are Cytoplasmic-facing. Residues 121-141 (LPFLAGWLFIALATNVAMILV) traverse the membrane as a helical segment. Over 142–144 (GRS) the chain is Extracellular. The chain crosses the membrane as a helical span at residues 145-165 (ICGFCVGVASLSLPVYLGESI). The Cytoplasmic portion of the chain corresponds to 166-172 (QPEVRGS). A helical membrane pass occupies residues 173 to 193 (LGLLPTVFGNSGILMCFTAGM). Residues 194-199 (YLAWRN) are Extracellular-facing. A helical membrane pass occupies residues 200-220 (LALLGACIPIIFLILMFLIPE). Over 221–282 (TPRWYISKGK…ELFRKNHIKP (62 aa)) the chain is Cytoplasmic. The helical transmembrane segment at 283 to 303 (VFISLGLMFFQQFSGINAVIF) threads the bilayer. Topologically, residues 304–319 (YTVQIFKDSGSTVDEN) are extracellular. Asparagine 319 carries N-linked (GlcNAc...) asparagine glycosylation. Residues 320–340 (LSTIIVGLVNFISTFVAAMII) traverse the membrane as a helical segment. At 341-346 (DRLGRK) the chain is on the cytoplasmic side. Residues 347 to 367 (MLLYISSILMCITLFTFGTFF) form a helical membrane-spanning segment. At 368 to 376 (YVKELMDVT) the chain is on the extracellular side. The helical transmembrane segment at 377–397 (AFGWIPLMSLIVYVIGFSFGF) threads the bilayer. At 398–410 (GPIPWLMMGEILP) the chain is on the cytoplasmic side. Residues 411-433 (VKIRGTAASVATAFNWSCTFVVT) traverse the membrane as a helical segment. The Extracellular portion of the chain corresponds to 434–446 (KTYEDLVLHIGPY). Residues 447-467 (GTFWLFGTLVAVAFIFVIICV) traverse the membrane as a helical segment. Over 468–502 (PETRGRSLEEIERRFAGPVRRTSAIANLKPMPITI) the chain is Cytoplasmic.

This sequence belongs to the major facilitator superfamily. Sugar transporter (TC 2.A.1.1) family. Trehalose transporter subfamily.

It localises to the cell membrane. In terms of biological role, moderate-capacity facilitative transporter for trehalose. Does not transport maltose, sucrose or lactose. Mediates the bidirectional transfer of trehalose. Responsible for the transport of trehalose synthesized in the fat body and the incorporation of trehalose into other tissues that require a carbon source, thereby regulating trehalose levels in the hemolymph. The polypeptide is Facilitated trehalose transporter Tret1 (Apis mellifera ligustica (Common honeybee)).